Consider the following 140-residue polypeptide: uncharacterized protein (140 aa).

A run of 2 helical transmembrane segments spans residues tyrosine 26–isoleucine 43 and leucine 64–leucine 86.

This sequence belongs to the bacteriophage holin family. Cp-1 holin subfamily.

It localises to the cell membrane. This is an uncharacterized protein from Bacillus subtilis (strain 168).